A 238-amino-acid chain; its full sequence is Pyridoxine 5'-phosphate synthase (238 aa).

N7 and R18 together coordinate 3-amino-2-oxopropyl phosphate. Residue H43 is the Proton acceptor of the active site. R45 and H50 together coordinate 1-deoxy-D-xylulose 5-phosphate. E70 acts as the Proton acceptor in catalysis. T100 serves as a coordination point for 1-deoxy-D-xylulose 5-phosphate. H190 functions as the Proton donor in the catalytic mechanism. 3-amino-2-oxopropyl phosphate contacts are provided by residues D191 and 213 to 214; that span reads GH.

It belongs to the PNP synthase family. In terms of assembly, homooctamer; tetramer of dimers.

It is found in the cytoplasm. It catalyses the reaction 3-amino-2-oxopropyl phosphate + 1-deoxy-D-xylulose 5-phosphate = pyridoxine 5'-phosphate + phosphate + 2 H2O + H(+). It functions in the pathway cofactor biosynthesis; pyridoxine 5'-phosphate biosynthesis; pyridoxine 5'-phosphate from D-erythrose 4-phosphate: step 5/5. Its function is as follows. Catalyzes the complicated ring closure reaction between the two acyclic compounds 1-deoxy-D-xylulose-5-phosphate (DXP) and 3-amino-2-oxopropyl phosphate (1-amino-acetone-3-phosphate or AAP) to form pyridoxine 5'-phosphate (PNP) and inorganic phosphate. The polypeptide is Pyridoxine 5'-phosphate synthase (Phocaeicola vulgatus (strain ATCC 8482 / DSM 1447 / JCM 5826 / CCUG 4940 / NBRC 14291 / NCTC 11154) (Bacteroides vulgatus)).